The sequence spans 615 residues: Sodium-dependent neutral amino acid transporter B(0)AT3 (615 aa).

The Cytoplasmic segment spans residues Met-1–Tyr-26. Residues Leu-27 to Cys-47 traverse the membrane as a helical segment. Over Gln-48–Gly-52 the chain is Extracellular. The chain crosses the membrane as a helical span at residues Gly-53–Ile-73. At Glu-74–Ser-105 the chain is on the cytoplasmic side. The helical transmembrane segment at Val-106–Leu-126 threads the bilayer. At Asn-127–Thr-177 the chain is on the extracellular side. 2 N-linked (GlcNAc...) asparagine glycosylation sites follow: Asn-143 and Asn-167. The helical transmembrane segment at Ile-178–Ile-198 threads the bilayer. Residues Arg-199 to Lys-206 are Cytoplasmic-facing. Residues Val-207 to Leu-227 traverse the membrane as a helical segment. The Extracellular portion of the chain corresponds to Thr-228–Asp-255. Residues Ala-256–Ser-276 traverse the membrane as a helical segment. The Cytoplasmic portion of the chain corresponds to Tyr-277 to Ala-288. Residues Val-289 to Val-309 form a helical membrane-spanning segment. At Met-310–Gly-397 the chain is on the extracellular side. N-linked (GlcNAc...) asparagine glycosylation is present at Asn-353. Residues Ala-398–Phe-418 traverse the membrane as a helical segment. The Cytoplasmic segment spans residues Gly-419–Glu-441. Residues Val-442–Ser-462 traverse the membrane as a helical segment. The Extracellular portion of the chain corresponds to Gly-463 to Ser-472. The chain crosses the membrane as a helical span at residues Phe-473–Ile-493. Residues Tyr-494–Arg-520 lie on the Cytoplasmic side of the membrane. A helical membrane pass occupies residues Val-521–Thr-541. The Extracellular segment spans residues Pro-542–Thr-570. A helical membrane pass occupies residues Cys-571 to Leu-591. Over Ser-592–Cys-615 the chain is Cytoplasmic.

This sequence belongs to the sodium:neurotransmitter symporter (SNF) (TC 2.A.22) family. SLC6A18 subfamily. Interacts with CLTRN; this interaction regulates the trafficking of SLC6A18 to the cell membrane and its activity. In terms of tissue distribution, expressed predominantly in kidney.

It is found in the apical cell membrane. Its subcellular location is the cell membrane. It catalyses the reaction L-alanine(out) + chloride(out) + 2 Na(+)(out) = L-alanine(in) + chloride(in) + 2 Na(+)(in). The catalysed reaction is glycine(out) + chloride(out) + 2 Na(+)(out) = glycine(in) + chloride(in) + 2 Na(+)(in). The enzyme catalyses L-methionine(out) + chloride(out) + 2 Na(+)(out) = L-methionine(in) + chloride(in) + 2 Na(+)(in). It carries out the reaction L-valine(out) + chloride(out) + 2 Na(+)(out) = L-valine(in) + chloride(in) + 2 Na(+)(in). It catalyses the reaction L-isoleucine(out) + chloride(out) + 2 Na(+)(out) = L-isoleucine(in) + chloride(in) + 2 Na(+)(in). The catalysed reaction is L-serine(out) + chloride(out) + 2 Na(+)(out) = L-serine(in) + chloride(in) + 2 Na(+)(in). The enzyme catalyses L-leucine(out) + chloride(out) + 2 Na(+)(out) = L-leucine(in) + chloride(in) + 2 Na(+)(in). Symporter that transports one amino acid molecule together with two sodium and one chloride ions in kidneys and plays a role in the neutral amino acids reabsorption. Preferentially transports neutral amino acids such as L-glycine and L-alanine but also other neutral amino acids. Required CLTRN for cell surface expression and for its amino acid transporter activity. The transport mechanism is pH-independent. The polypeptide is Sodium-dependent neutral amino acid transporter B(0)AT3 (Mus musculus (Mouse)).